Here is a 214-residue protein sequence, read N- to C-terminus: Phosphatidylserine decarboxylase proenzyme (214 aa).

Serine 182 acts as the Schiff-base intermediate with substrate; via pyruvic acid in catalysis. Serine 182 is subject to Pyruvic acid (Ser); by autocatalysis.

Belongs to the phosphatidylserine decarboxylase family. PSD-A subfamily. Heterodimer of a large membrane-associated beta subunit and a small pyruvoyl-containing alpha subunit. It depends on pyruvate as a cofactor. Is synthesized initially as an inactive proenzyme. Formation of the active enzyme involves a self-maturation process in which the active site pyruvoyl group is generated from an internal serine residue via an autocatalytic post-translational modification. Two non-identical subunits are generated from the proenzyme in this reaction, and the pyruvate is formed at the N-terminus of the alpha chain, which is derived from the carboxyl end of the proenzyme. The post-translation cleavage follows an unusual pathway, termed non-hydrolytic serinolysis, in which the side chain hydroxyl group of the serine supplies its oxygen atom to form the C-terminus of the beta chain, while the remainder of the serine residue undergoes an oxidative deamination to produce ammonia and the pyruvoyl prosthetic group on the alpha chain.

It localises to the cell membrane. It carries out the reaction a 1,2-diacyl-sn-glycero-3-phospho-L-serine + H(+) = a 1,2-diacyl-sn-glycero-3-phosphoethanolamine + CO2. It participates in phospholipid metabolism; phosphatidylethanolamine biosynthesis; phosphatidylethanolamine from CDP-diacylglycerol: step 2/2. Functionally, catalyzes the formation of phosphatidylethanolamine (PtdEtn) from phosphatidylserine (PtdSer). This chain is Phosphatidylserine decarboxylase proenzyme, found in Solidesulfovibrio magneticus (strain ATCC 700980 / DSM 13731 / RS-1) (Desulfovibrio magneticus).